The primary structure comprises 156 residues: Small ribosomal subunit protein uS7 (156 aa).

The protein belongs to the universal ribosomal protein uS7 family. In terms of assembly, part of the 30S ribosomal subunit. Contacts proteins S9 and S11.

In terms of biological role, one of the primary rRNA binding proteins, it binds directly to 16S rRNA where it nucleates assembly of the head domain of the 30S subunit. Is located at the subunit interface close to the decoding center, probably blocks exit of the E-site tRNA. This chain is Small ribosomal subunit protein uS7, found in Pseudomonas fluorescens (strain SBW25).